The primary structure comprises 100 residues: Aspartyl/glutamyl-tRNA(Asn/Gln) amidotransferase subunit C (100 aa).

The protein belongs to the GatC family. In terms of assembly, heterotrimer of A, B and C subunits.

The enzyme catalyses L-glutamyl-tRNA(Gln) + L-glutamine + ATP + H2O = L-glutaminyl-tRNA(Gln) + L-glutamate + ADP + phosphate + H(+). The catalysed reaction is L-aspartyl-tRNA(Asn) + L-glutamine + ATP + H2O = L-asparaginyl-tRNA(Asn) + L-glutamate + ADP + phosphate + 2 H(+). In terms of biological role, allows the formation of correctly charged Asn-tRNA(Asn) or Gln-tRNA(Gln) through the transamidation of misacylated Asp-tRNA(Asn) or Glu-tRNA(Gln) in organisms which lack either or both of asparaginyl-tRNA or glutaminyl-tRNA synthetases. The reaction takes place in the presence of glutamine and ATP through an activated phospho-Asp-tRNA(Asn) or phospho-Glu-tRNA(Gln). The protein is Aspartyl/glutamyl-tRNA(Asn/Gln) amidotransferase subunit C of Corynebacterium aurimucosum (strain ATCC 700975 / DSM 44827 / CIP 107346 / CN-1) (Corynebacterium nigricans).